A 597-amino-acid polypeptide reads, in one-letter code: Elongation factor 4 (597 aa).

Residues 2–184 enclose the tr-type G domain; that stretch reads KHIRNFSIIA…NIVSAIPAPE (183 aa). Residues 14–19 and 131–134 each bind GTP; these read DHGKST and NKID.

This sequence belongs to the TRAFAC class translation factor GTPase superfamily. Classic translation factor GTPase family. LepA subfamily.

It localises to the cell inner membrane. The enzyme catalyses GTP + H2O = GDP + phosphate + H(+). Required for accurate and efficient protein synthesis under certain stress conditions. May act as a fidelity factor of the translation reaction, by catalyzing a one-codon backward translocation of tRNAs on improperly translocated ribosomes. Back-translocation proceeds from a post-translocation (POST) complex to a pre-translocation (PRE) complex, thus giving elongation factor G a second chance to translocate the tRNAs correctly. Binds to ribosomes in a GTP-dependent manner. This is Elongation factor 4 from Vibrio parahaemolyticus serotype O3:K6 (strain RIMD 2210633).